We begin with the raw amino-acid sequence, 261 residues long: MGCIQSITCKARIRRENIVVYDVCATIDQCPTRIEETSPIVLRYKTPYFKASARVVMPPIPRHETWVVGWIQACNQMEFFNTYSDLGMSSWELPDLREGRVKAISDSDGVSYPWYGNTTETVTLVGPTNKISRFSVSMNDNFYPSVTWAVPVSDSNVPLLTRIKRDQSFTTWLVAMNTTTKEKIILQTIKWRMRVDIEVDPLQLLGQRARLVGRTQQEQPRILSRMEPIPPNALVKPNANDAQVLMWRPKRGPPLVVIPPK.

This sequence belongs to the FAM78 family.

This Homo sapiens (Human) protein is Protein FAM78B (FAM78B).